The sequence spans 187 residues: Elongation factor P (187 aa).

Belongs to the elongation factor P family.

The protein localises to the cytoplasm. Its pathway is protein biosynthesis; polypeptide chain elongation. Its function is as follows. Involved in peptide bond synthesis. Stimulates efficient translation and peptide-bond synthesis on native or reconstituted 70S ribosomes in vitro. Probably functions indirectly by altering the affinity of the ribosome for aminoacyl-tRNA, thus increasing their reactivity as acceptors for peptidyl transferase. This chain is Elongation factor P, found in Jannaschia sp. (strain CCS1).